A 230-amino-acid chain; its full sequence is Ribose-5-phosphate isomerase A (230 aa).

Substrate-binding positions include 28–31 (TGST), 83–86 (DGAD), and 97–100 (KGLG). Residue E106 is the Proton acceptor of the active site. K124 contacts substrate.

It belongs to the ribose 5-phosphate isomerase family. In terms of assembly, homodimer.

The catalysed reaction is aldehydo-D-ribose 5-phosphate = D-ribulose 5-phosphate. It participates in carbohydrate degradation; pentose phosphate pathway; D-ribose 5-phosphate from D-ribulose 5-phosphate (non-oxidative stage): step 1/1. Its function is as follows. Catalyzes the reversible conversion of ribose-5-phosphate to ribulose 5-phosphate. The polypeptide is Ribose-5-phosphate isomerase A (Gloeobacter violaceus (strain ATCC 29082 / PCC 7421)).